Reading from the N-terminus, the 398-residue chain is Protein FAM53A (398 aa).

Residues 85–253 are disordered; sequence QWQPQSPRPG…TSTPALGGRR (169 aa). Residues 103-115 are compositionally biased toward polar residues; sequence VDPSESTGSSTAP. Positions 123–132 are enriched in basic and acidic residues; sequence SLSEPEELVR. Serine 125 is subject to Phosphoserine. Low complexity-rich tracts occupy residues 176–193 and 234–250; these read STGP…ASGG and TPLP…PALG. A Nuclear localization signal motif is present at residues 268 to 276; the sequence is KRSRRKRRR. A phosphoserine mark is found at serine 301 and serine 304. The disordered stretch occupies residues 336–398; it reads PGCSQRGLRT…ELDLEQIENN (63 aa). Over residues 363-375 the composition is skewed to basic and acidic residues; it reads GSRRSSGDPRDGD.

It belongs to the FAM53 family.

The protein resides in the nucleus. May play an important role in neural development; the dorsomedial roof of the third ventricle. This Homo sapiens (Human) protein is Protein FAM53A.